Reading from the N-terminus, the 625-residue chain is 1-deoxy-D-xylulose-5-phosphate synthase (625 aa).

Thiamine diphosphate contacts are provided by residues histidine 80 and 121-123; that span reads GHS. A Mg(2+)-binding site is contributed by aspartate 152. Thiamine diphosphate is bound by residues 153–154, asparagine 181, tyrosine 290, and glutamate 371; that span reads GS. Mg(2+) is bound at residue asparagine 181.

The protein belongs to the transketolase family. DXPS subfamily. As to quaternary structure, homodimer. The cofactor is Mg(2+). Thiamine diphosphate serves as cofactor.

It catalyses the reaction D-glyceraldehyde 3-phosphate + pyruvate + H(+) = 1-deoxy-D-xylulose 5-phosphate + CO2. It functions in the pathway metabolic intermediate biosynthesis; 1-deoxy-D-xylulose 5-phosphate biosynthesis; 1-deoxy-D-xylulose 5-phosphate from D-glyceraldehyde 3-phosphate and pyruvate: step 1/1. Functionally, catalyzes the acyloin condensation reaction between C atoms 2 and 3 of pyruvate and glyceraldehyde 3-phosphate to yield 1-deoxy-D-xylulose-5-phosphate (DXP). This Haemophilus influenzae (strain PittGG) protein is 1-deoxy-D-xylulose-5-phosphate synthase.